The sequence spans 356 residues: tRNA N6-adenosine threonylcarbamoyltransferase (356 aa).

Residues H116 and H120 each coordinate Fe cation. Residues 139 to 143, D174, G187, D191, and N281 contribute to the substrate site; that span reads IVSGG. D309 is a binding site for Fe cation.

This sequence belongs to the KAE1 / TsaD family. It depends on Fe(2+) as a cofactor.

The protein resides in the cytoplasm. The catalysed reaction is L-threonylcarbamoyladenylate + adenosine(37) in tRNA = N(6)-L-threonylcarbamoyladenosine(37) in tRNA + AMP + H(+). Required for the formation of a threonylcarbamoyl group on adenosine at position 37 (t(6)A37) in tRNAs that read codons beginning with adenine. Is involved in the transfer of the threonylcarbamoyl moiety of threonylcarbamoyl-AMP (TC-AMP) to the N6 group of A37, together with TsaE and TsaB. TsaD likely plays a direct catalytic role in this reaction. This Frankia casuarinae (strain DSM 45818 / CECT 9043 / HFP020203 / CcI3) protein is tRNA N6-adenosine threonylcarbamoyltransferase.